Here is a 208-residue protein sequence, read N- to C-terminus: Glycerol-3-phosphate acyltransferase 1 (208 aa).

The next 5 helical transmembrane spans lie at 52 to 72 (VVLMDLAKGALAVSVAYYLLI), 77 to 97 (WVILTGFAAVIGHNWPIWLDF), 112 to 132 (FLLPVYGLPQHLLILALLVFI), 140 to 160 (IALATGIALFSLPFLVWYGSH), and 161 to 181 (SEFATLISVLLFLMIGIKFVL).

Belongs to the PlsY family. In terms of assembly, probably interacts with PlsX.

The protein resides in the cell membrane. The catalysed reaction is an acyl phosphate + sn-glycerol 3-phosphate = a 1-acyl-sn-glycero-3-phosphate + phosphate. It functions in the pathway lipid metabolism; phospholipid metabolism. Its function is as follows. Catalyzes the transfer of an acyl group from acyl-phosphate (acyl-PO(4)) to glycerol-3-phosphate (G3P) to form lysophosphatidic acid (LPA). This enzyme utilizes acyl-phosphate as fatty acyl donor, but not acyl-CoA or acyl-ACP. This is Glycerol-3-phosphate acyltransferase 1 from Dehalococcoides mccartyi (strain ATCC BAA-2266 / KCTC 15142 / 195) (Dehalococcoides ethenogenes (strain 195)).